Here is a 363-residue protein sequence, read N- to C-terminus: Flagellar P-ring protein (363 aa).

The first 20 residues, 1-20, serve as a signal peptide directing secretion; the sequence is MKCKLIFAVFMLAFSMPSQA.

Belongs to the FlgI family. In terms of assembly, the basal body constitutes a major portion of the flagellar organelle and consists of four rings (L,P,S, and M) mounted on a central rod.

The protein localises to the periplasm. It localises to the bacterial flagellum basal body. Functionally, assembles around the rod to form the L-ring and probably protects the motor/basal body from shearing forces during rotation. In Shewanella oneidensis (strain ATCC 700550 / JCM 31522 / CIP 106686 / LMG 19005 / NCIMB 14063 / MR-1), this protein is Flagellar P-ring protein.